The sequence spans 468 residues: MKVDFDSLNNIFFVGIKGSGVCSLACFLNSKGYFVEGVDVPDKFYTDDILNNNEISYYENIYEFSLKELDRSFDLIVYSSAYDKDGLQVLLEAKELNIPILSYSEVLGELSRKHYSIGIAGSHGKTTTTAFLGILFDKLGLNPNVIVGSSVKDFGDNSAIAGISDIFIVETCEYKKHFLYFSPNMLILTNVDYEHVDFFKNYEALEDAFLQYINNLKKNGILIINSDDKNLLKIKSQINREDINIFSFGSRDLSNFQISNIVVKNEYFCFSFLGLYNIELRTVLFHNILNFSAALLALNLFLESNGKSIFDFEEVVKRVAKNYSGIKRRSELIKEKKGVIYMDDYAHHPREIRATLFGIKNFYKNKRIILDFMPHTFTRTKEFFDDFVEVLNIADVLILHNIYLSNRENFNPDELSFKLFLNIKKINKNTYFFKDVKDSINFIKSLLISGDLFITMGAGNNFILHDFL.

121 to 127 (GSHGKTT) is a binding site for ATP.

Belongs to the MurCDEF family.

The protein resides in the cytoplasm. It catalyses the reaction UDP-N-acetyl-alpha-D-muramate + L-alanine + ATP = UDP-N-acetyl-alpha-D-muramoyl-L-alanine + ADP + phosphate + H(+). Its pathway is cell wall biogenesis; peptidoglycan biosynthesis. In terms of biological role, cell wall formation. This is UDP-N-acetylmuramate--L-alanine ligase from Borrelia garinii subsp. bavariensis (strain ATCC BAA-2496 / DSM 23469 / PBi) (Borreliella bavariensis).